The primary structure comprises 406 residues: CRISP/Allergen/PR-1 (406 aa).

An N-terminal signal peptide occupies residues 1 to 18; it reads MHFQVILMMMWLWLEAEG. N-linked (GlcNAc...) asparagine glycosylation occurs at asparagine 39. One can recognise an SCP domain in the interval 58–205; the sequence is LREHNKLRSR…TFKDLYTCNY (148 aa).

It belongs to the CRISP family. Post-translationally, contains 9 disulfide bonds. In terms of tissue distribution, expressed by the venom gland.

The protein resides in the secreted. The sequence is that of CRISP/Allergen/PR-1 from Trittame loki (Brush-footed trapdoor spider).